The sequence spans 521 residues: Acetyl-CoA hydrolase (521 aa).

A CoA-binding site is contributed by 276–280 (GIGNI). Residue Glu301 is the 5-glutamyl coenzyme A thioester intermediate of the active site. Asn391 and Gly395 together coordinate CoA.

The protein belongs to the acetyl-CoA hydrolase/transferase family.

The protein localises to the cytoplasm. It carries out the reaction acetyl-CoA + H2O = acetate + CoA + H(+). Its function is as follows. Presumably involved in regulating the intracellular acetyl-CoA pool for fatty acid and cholesterol synthesis and fatty acid oxidation. This is Acetyl-CoA hydrolase (ach1) from Schizosaccharomyces pombe (strain 972 / ATCC 24843) (Fission yeast).